A 100-amino-acid chain; its full sequence is Class II hydrophobin CU (100 aa).

The N-terminal stretch at 1–25 (MQFSIATIALFLSSAMAAPYSGNSN) is a signal peptide. Intrachain disulfides connect Cys32–Cys82, Cys42–Cys72, Cys43–Cys55, and Cys83–Cys94.

The protein belongs to the cerato-ulmin hydrophobin family. Homotetramer. Further self-assembles to form highly ordered films at water-air interfaces through intermolecular interactions.

Its subcellular location is the secreted. The protein localises to the cell wall. Its function is as follows. Aerial growth, conidiation, and dispersal of filamentous fungi in the environment rely upon a capability of their secreting small amphipathic proteins called hydrophobins (HPBs) with low sequence identity. Class I can self-assemble into an outermost layer of rodlet bundles on aerial cell surfaces, conferring cellular hydrophobicity that supports fungal growth, development and dispersal; whereas Class II form highly ordered films at water-air interfaces through intermolecular interactions but contribute nothing to the rodlet structure. CU is a class II hydrophobin that is implicated in the pathogenicity of this fungus on elm trees. Required for hydrophobicity and adherence of the cells and acts as a parasitic fitness factor by protecting infectious propagules from desiccation. Reduces the interfacial tension of both oil-water and air-water interfaces. The polypeptide is Class II hydrophobin CU (Ophiostoma ulmi (Dutch elm disease fungus)).